We begin with the raw amino-acid sequence, 364 residues long: MKTNLLNYDLQGLTRHFADMGEKPFRAKQVMRWMHQSGAQNFNEMTDLAKSLRHKLNEQAGIEIPKLMMSQKSSDGTRKWLLDVGTGNGVETVFIPESDRGTLCISSQVGCALECTFCSTGRQGFNRNLTAAEIIGQLWWANKAMGVTPKNERVISNVVMMGMGEPMANFDNVVTALSIMLDDHGYGLSRRRVTVSTSGMVPQMDRLRDVMPVALAVSLHASNDEVRNQIVPLNKKYPLKELMAACQRYLVKAPRDFITFEYVMLDGINDKAQHARELIELVTDVPCKFNLIPFNPFPNSGYERSSNENIRVFRDILQQAGFVVTVRKTRGDDIDAACGQLAGQVQDKTRRQQKWQQILIGQQG.

Glu-91 (proton acceptor) is an active-site residue. Residues 97–333 (ESDRGTLCIS…VTVRKTRGDD (237 aa)) enclose the Radical SAM core domain. Residues Cys-104 and Cys-338 are joined by a disulfide bond. [4Fe-4S] cluster-binding residues include Cys-111, Cys-115, and Cys-118. Residues 164–165 (GE), Ser-196, 218–220 (SLH), and Asn-295 each bind S-adenosyl-L-methionine. The active-site S-methylcysteine intermediate is the Cys-338.

The protein belongs to the radical SAM superfamily. RlmN family. The cofactor is [4Fe-4S] cluster.

The protein localises to the cytoplasm. The catalysed reaction is adenosine(2503) in 23S rRNA + 2 reduced [2Fe-2S]-[ferredoxin] + 2 S-adenosyl-L-methionine = 2-methyladenosine(2503) in 23S rRNA + 5'-deoxyadenosine + L-methionine + 2 oxidized [2Fe-2S]-[ferredoxin] + S-adenosyl-L-homocysteine. It carries out the reaction adenosine(37) in tRNA + 2 reduced [2Fe-2S]-[ferredoxin] + 2 S-adenosyl-L-methionine = 2-methyladenosine(37) in tRNA + 5'-deoxyadenosine + L-methionine + 2 oxidized [2Fe-2S]-[ferredoxin] + S-adenosyl-L-homocysteine. Functionally, specifically methylates position 2 of adenine 2503 in 23S rRNA and position 2 of adenine 37 in tRNAs. m2A2503 modification seems to play a crucial role in the proofreading step occurring at the peptidyl transferase center and thus would serve to optimize ribosomal fidelity. In Neisseria meningitidis serogroup A / serotype 4A (strain DSM 15465 / Z2491), this protein is Dual-specificity RNA methyltransferase RlmN.